A 1578-amino-acid chain; its full sequence is MASSAREHLLFVRRRNPQMRYTLSPENLQSLAAQNSMPENMALQRANSDTDLVTSESRSSLTASMYEYTLGQAQNLIIFWDIKEEVDPSDWIGLYHIDENSPANFWDSKNRGVTGTQKGQIVWRIEPGPYFMEPEIKICFKYYHGISGALRATTPCITVKNPAVMMGAEGMEGGASGSLHSRKLVSFTLSDLRAVGLKKGMFFNPDPYLKMSIQPGKKSSFPTCAHHGQERRSTIISNTTNPIWHREKYSFFALLTDVLEIEIKDKFAKSRPIIKRFLGKLTIPVQRLLERQAGDQMLSYNLGRRLPADHVSGYLQFKVEVTSSAHEDASPEAVGTILGVHTVNGDLGSPSDEEDMPGSHHDSTICANGPVSEDSVADGTPKHSFRTSSTLEIDTEDLISTSSRNSPPRGRQDSLNDYLDAIEHNGPARPGAASSSERSMGASPKLRSSFPTDTRLNAMLHIDSDEEDHEFQQDLGYPSSLEEEGGLIMCSRASRIDDGSLTSQTKPEDDNPVENEDASIHETASLEERLENLPEVADGSLPSSTAPDENEANLEPQPSADQGSTELCSSQEVDQPTSGADAGASDTSGGSRRAASETESLDQGSEPSQVSSETEPSDPARTESVSEASTRPEGESDPEGADSSCNESVTTQLSSVETRCSSLESARFPETPAFSSQEEEDGACAAEPTSSGPAEGSQESVCTPSSLPAVQVPSREEEGSAAEAAALSEQGELGEVWQRRGSLEGAAAAAPAAAATDSQPQEDGDAGDAQGACEGATAQEEGATGGSQTNGHQPLRSLPSVRQDVSRYQRVDEALPPNWEARIDSHGRIFYVDHVNRTTTWQRPTAPPAPQVLQRSNSIQQMEQLNRRYQSIRRTMTNERPEENTSAIDGAGEEADFHQASADFRRENVLPHSTSRSRLTLLLQSPPVKFLISPEFFTVLHSNPSAYRMFTNNTCLKHMITKVRRDTHHFERYQHNRDLVGFLNMFANKQLELPRGWEMKHDHQGKAFFVDHNSRTTTFIDPRLPLQSSRPTSALVHRQHLTRQRSHSAGEVGEDSRHAGPPVLPRPSSTFNTVSRPQYQDMVPVAYNDKIVAFLRQPNILEILQERQPDLARNHSLREKIQFIRTEGTPGLVRLSSDADLVMLLSLFEEEIMSYVPPHALLHPSYCQSPRGSPVSSPQNSPGTQRANARAPAPYKRDFEAKLRNFYRKLETKGYGQGPGKLKLIIRRDHLLEDAFNQIMGYSRKDLQRNKLYVTFVGEEGLDYSGPSREFFFLVSRELFNPYYGLFEYSANDTYTVQISPMSAFVDNHHEWFRFSGRILGLALIHQYLLDAFFTRPFYKALLRILCDLSDLEYLDEEFHQSLQWMKDNDIHDILDLTFTVNEEVFGQITERELKPGGANIPVTEKNKKEYIERMVKWRIERGVVQQTESLVRGFYEVVDARLVSVFDARELELVIAGTAEIDLNDWRNNTEYRGGYHDNHIVIRWFWAAVERFNNEQRLRLLQFVTGTSSIPYEGFASLRGSNGPRRFCVEKWGKITALPRAHTCFNRLDLPPYPSFSMLYEKLLTAVEETSTFGLE.

Serine 48 carries the phosphoserine modification. The C2 domain maps to 171–298 (MEGGASGSLH…LERQAGDQML (128 aa)). 2 disordered regions span residues 341–453 (HTVN…FPTD) and 496–802 (IDDG…PSVR). A compositionally biased stretch (polar residues) spans 386–406 (RTSSTLEIDTEDLISTSSRNS). A compositionally biased stretch (basic and acidic residues) spans 518 to 532 (ASIHETASLEERLEN). Over residues 559-576 (SADQGSTELCSSQEVDQP) the composition is skewed to polar residues. The segment covering 577-593 (TSGADAGASDTSGGSRR) has biased composition (low complexity). 3 stretches are compositionally biased toward polar residues: residues 597 to 614 (ETES…SSET), 643 to 664 (SSCN…SSLE), and 688 to 708 (PTSS…SSLP). Composition is skewed to low complexity over residues 721–735 (AAEA…ELGE), 746–755 (AAAAAPAAAA), and 769–782 (AQGA…QEEG). The segment at 737–1074 (WQRRGSLEGA…PRPSSTFNTV (338 aa)) is interaction with TP73. In terms of domain architecture, WW 1 spans 813-846 (EALPPNWEARIDSHGRIFYVDHVNRTTTWQRPTA). A coiled-coil region spans residues 853–880 (LQRSNSIQQMEQLNRRYQSIRRTMTNER). Phosphoserine is present on residues serine 858 and serine 915. In terms of domain architecture, WW 2 spans 991-1024 (LELPRGWEMKHDHQGKAFFVDHNSRTTTFIDPRL). Disordered stretches follow at residues 1030 to 1075 (RPTS…NTVS) and 1167 to 1193 (CQSP…RAPA). Basic residues predominate over residues 1037-1046 (HRQHLTRQRS). Over residues 1167–1187 (CQSPRGSPVSSPQNSPGTQRA) the composition is skewed to polar residues. Position 1181 is a phosphoserine (serine 1181). An HECT domain is found at 1243–1578 (SRKDLQRNKL…VEETSTFGLE (336 aa)). Cysteine 1546 serves as the catalytic Glycyl thioester intermediate.

Interacts with TP73. Interacts with FZR1.

The protein resides in the cytoplasm. Its subcellular location is the cytoskeleton. The protein localises to the spindle. It catalyses the reaction S-ubiquitinyl-[E2 ubiquitin-conjugating enzyme]-L-cysteine + [acceptor protein]-L-lysine = [E2 ubiquitin-conjugating enzyme]-L-cysteine + N(6)-ubiquitinyl-[acceptor protein]-L-lysine.. Its pathway is protein modification; protein ubiquitination. In terms of biological role, E3 ubiquitin-protein ligase that mediates ubiquitination of TP73. Acts to stabilize TP73 and enhance activation of transcription by TP73. Involved in the regulation of mitotic metaphase/anaphase transition. The sequence is that of E3 ubiquitin-protein ligase HECW2 (Hecw2) from Mus musculus (Mouse).